Reading from the N-terminus, the 336-residue chain is Mitochondrial amidoxime reducing component 2 (336 aa).

The transit peptide at methionine 1–leucine 35 directs the protein to the mitochondrion. Residues lysine 138, lysine 144, lysine 173, lysine 187, lysine 287, and lysine 294 each participate in a glycyl lysine isopeptide (Lys-Gly) (interchain with G-Cter in ubiquitin) cross-link. The MOSC domain occupies alanine 188–methionine 334.

Component of a complex composed of cytochrome b5, NADH-cytochrome b5 reductase (CYB5R3) and MTARC2. Requires Mo-molybdopterin as cofactor. Ubiquitinated by PRKN during mitophagy, leading to its degradation and enhancement of mitophagy. Deubiquitinated by USP30.

The protein resides in the mitochondrion outer membrane. It is found in the peroxisome. The catalysed reaction is N(omega)-hydroxy-L-arginine + 2 Fe(II)-[cytochrome b5] + 2 H(+) = L-arginine + 2 Fe(III)-[cytochrome b5] + H2O. In terms of biological role, catalyzes the reduction of N-oxygenated molecules, acting as a counterpart of cytochrome P450 and flavin-containing monooxygenases in metabolic cycles. As a component of prodrug-converting system, reduces a multitude of N-hydroxylated prodrugs particularly amidoximes, leading to increased drug bioavailability. May be involved in mitochondrial N(omega)-hydroxy-L-arginine (NOHA) reduction, regulating endogenous nitric oxide levels and biosynthesis. Postulated to cleave the N-OH bond of N-hydroxylated substrates in concert with electron transfer from NADH to cytochrome b5 reductase then to cytochrome b5, the ultimate electron donor that primes the active site for substrate reduction. In Bos taurus (Bovine), this protein is Mitochondrial amidoxime reducing component 2 (MTARC2).